Here is a 60-residue protein sequence, read N- to C-terminus: Large ribosomal subunit protein uL30 (60 aa).

Belongs to the universal ribosomal protein uL30 family. Part of the 50S ribosomal subunit.

This chain is Large ribosomal subunit protein uL30, found in Lactiplantibacillus plantarum (strain ATCC BAA-793 / NCIMB 8826 / WCFS1) (Lactobacillus plantarum).